The primary structure comprises 331 residues: Ribosomal RNA small subunit methyltransferase H (331 aa).

S-adenosyl-L-methionine contacts are provided by residues 56-58 (GGH), D76, F100, D122, and Q129.

It belongs to the methyltransferase superfamily. RsmH family.

The protein resides in the cytoplasm. The catalysed reaction is cytidine(1402) in 16S rRNA + S-adenosyl-L-methionine = N(4)-methylcytidine(1402) in 16S rRNA + S-adenosyl-L-homocysteine + H(+). Its function is as follows. Specifically methylates the N4 position of cytidine in position 1402 (C1402) of 16S rRNA. The chain is Ribosomal RNA small subunit methyltransferase H from Chromohalobacter salexigens (strain ATCC BAA-138 / DSM 3043 / CIP 106854 / NCIMB 13768 / 1H11).